Reading from the N-terminus, the 129-residue chain is uncharacterized protein (129 aa).

2 C2H2-type zinc fingers span residues 75 to 99 (FVCPLCLMPFSSSVSLKQHIRYTEH) and 101 to 124 (KVCPVCKKEFTSTDSALDHVCKKH).

Functionally, essential for virus function. This is an uncharacterized protein from Saccharolobus solfataricus (Sulfolobus solfataricus).